Consider the following 71-residue polypeptide: Beta-defensin 124 (71 aa).

Positions 1–22 (MTQLLLFLVALLVLGHVPSGRS) are cleaved as a signal peptide. Cystine bridges form between cysteine 27–cysteine 54, cysteine 34–cysteine 48, and cysteine 38–cysteine 55.

The protein belongs to the beta-defensin family.

Its subcellular location is the secreted. Has antibacterial activity. The protein is Beta-defensin 124 (DEFB124) of Pan troglodytes (Chimpanzee).